Consider the following 160-residue polypeptide: Dr hemagglutinin structural subunit (160 aa).

The first 21 residues, M1–A21, serve as a signal peptide directing secretion. Positions G22–R75 are receptor-binding.

Belongs to the Dr-adhesin family.

Its subcellular location is the fimbrium. Hemagglutinins of uropathogenic E.coli mediate adherence to the upper urinary tract. These adhesins bind to the Dr blood group antigen and also agglutinate human erythrocytes in the presence of D-mannose (mannose-resistant hemagglutination (MRHA)). The sequence is that of Dr hemagglutinin structural subunit (draA) from Escherichia coli.